We begin with the raw amino-acid sequence, 505 residues long: Poxin-Schlafen (505 aa).

Residues 1–238 are poxin-like; sequence MAMFYAHAFG…SKEERVDYVL (238 aa). Histidine 17 serves as the catalytic Proton donor. Tyrosine 138 (shared with catalytic histidine of dimeric partner) is an active-site residue. Residue lysine 142 is the Proton acceptor; shared with catalytic histidine of dimeric partner of the active site. Residues 239-505 are schlafen-like; that stretch reads MKRLESIRHL…PDEWVSHIKF (267 aa).

The protein in the N-terminal section; belongs to the poxin family. It in the C-terminal section; belongs to the Schlafen protein family. Subgroup poxviridae B3 subfamily. Homodimer.

It catalyses the reaction 2',3'-cGAMP + H2O = Gp(2'-5')Ap(3') + H(+). Its function is as follows. Nuclease that is responsible for viral evasion of host cGAS-STING innate immunity. Cleaves 2',3'-cGAMP which is produced by host cGAS following recognition of cytosolic DNA and blocks the subsequent 2',3'-cGAMP-mediated activation of TMEM173/STING, which normally spreads to adjacent cells and activates the interferon and NF-kappa-B immune responses. The sequence is that of Poxin-Schlafen (OPG188) from Bos taurus (Bovine).